The following is a 481-amino-acid chain: GDP-fucose protein O-fucosyltransferase 2 (481 aa).

The first 22 residues, 1–22 (MKGRAHIWVALLLACLPPRFRN), serve as a signal peptide directing secretion. Residues 59-63 (GEGFN), 287-289 (HLR), D365, and 382-383 (RF) contribute to the GDP-beta-L-fucose site. Catalysis depends on E60, which acts as the Proton acceptor.

It belongs to the glycosyltransferase 68 family.

Its subcellular location is the endoplasmic reticulum. The enzyme catalyses L-seryl-[protein] + GDP-beta-L-fucose = 3-O-(alpha-L-fucosyl)-L-seryl-[protein] + GDP + H(+). It catalyses the reaction L-threonyl-[protein] + GDP-beta-L-fucose = 3-O-(alpha-L-fucosyl)-L-threonyl-[protein] + GDP + H(+). It functions in the pathway protein modification; protein glycosylation. Its function is as follows. Catalyzes the reaction that attaches fucose through an O-glycosidic linkage to a conserved serine or threonine residue in the consensus sequence C1-X-X-S/T-C2 of thrombospondin type I repeats (TSRs) where C1 and C2 are the first and second cysteines of the repeat, respectively. O-fucosylates sporozoite proteins CSP and TRAP. O-fucosylation regulates stability and intracellular trafficking of TRAP but not of CSP. Probably by regulating protein O-fucosylation, may play a role in parasite transmission to the mosquito vector and/or infection of the vertebrate host hepatocytes; however, POFUT2 involvement in transmission/infection is controversial. The sequence is that of GDP-fucose protein O-fucosyltransferase 2 from Plasmodium vivax (strain Salvador I).